The chain runs to 249 residues: Tetrahydromethanopterin S-methyltransferase subunit A (249 aa).

At 1-227 (MADKKEVIQN…KISSGYYAGK (227 aa)) the chain is on the cytoplasmic side. 5-hydroxybenzimidazolylcob(I)amide is bound at residue histidine 84. Residues 228 to 248 (IEGIVIGFILTLVFLIIIIQG) form a helical membrane-spanning segment. A topological domain (extracellular) is located at residue leucine 249.

The protein belongs to the MtrA family. In terms of assembly, the complex is composed of 8 subunits; MtrA, MtrB, MtrC, MtrD, MtrE, MtrF, MtrG and MtrH. It depends on 5-hydroxybenzimidazolylcob(I)amide as a cofactor.

The protein resides in the cell membrane. The enzyme catalyses 5-methyl-5,6,7,8-tetrahydromethanopterin + coenzyme M + 2 Na(+)(in) = 5,6,7,8-tetrahydromethanopterin + methyl-coenzyme M + 2 Na(+)(out). It functions in the pathway one-carbon metabolism; methanogenesis from CO(2); methyl-coenzyme M from 5,10-methylene-5,6,7,8-tetrahydromethanopterin: step 2/2. Its function is as follows. Part of a complex that catalyzes the formation of methyl-coenzyme M and tetrahydromethanopterin from coenzyme M and methyl-tetrahydromethanopterin. This is an energy-conserving, sodium-ion translocating step. This Methanosphaera stadtmanae (strain ATCC 43021 / DSM 3091 / JCM 11832 / MCB-3) protein is Tetrahydromethanopterin S-methyltransferase subunit A.